Here is a 126-residue protein sequence, read N- to C-terminus: Holo-[acyl-carrier-protein] synthase (126 aa).

Mg(2+) is bound by residues Asp-9 and Glu-58.

It belongs to the P-Pant transferase superfamily. AcpS family. It depends on Mg(2+) as a cofactor.

The protein localises to the cytoplasm. It carries out the reaction apo-[ACP] + CoA = holo-[ACP] + adenosine 3',5'-bisphosphate + H(+). Functionally, transfers the 4'-phosphopantetheine moiety from coenzyme A to a Ser of acyl-carrier-protein. The protein is Holo-[acyl-carrier-protein] synthase of Yersinia pseudotuberculosis serotype I (strain IP32953).